A 184-amino-acid polypeptide reads, in one-letter code: ATP synthase subunit b, chloroplastic (184 aa).

Residues 27 to 49 traverse the membrane as a helical segment; sequence LATNLINLSVVLGVLIFFGKGVL.

The protein belongs to the ATPase B chain family. As to quaternary structure, F-type ATPases have 2 components, F(1) - the catalytic core - and F(0) - the membrane proton channel. F(1) has five subunits: alpha(3), beta(3), gamma(1), delta(1), epsilon(1). F(0) has four main subunits: a(1), b(1), b'(1) and c(10-14). The alpha and beta chains form an alternating ring which encloses part of the gamma chain. F(1) is attached to F(0) by a central stalk formed by the gamma and epsilon chains, while a peripheral stalk is formed by the delta, b and b' chains.

The protein localises to the plastid. The protein resides in the chloroplast thylakoid membrane. Its function is as follows. F(1)F(0) ATP synthase produces ATP from ADP in the presence of a proton or sodium gradient. F-type ATPases consist of two structural domains, F(1) containing the extramembraneous catalytic core and F(0) containing the membrane proton channel, linked together by a central stalk and a peripheral stalk. During catalysis, ATP synthesis in the catalytic domain of F(1) is coupled via a rotary mechanism of the central stalk subunits to proton translocation. Functionally, component of the F(0) channel, it forms part of the peripheral stalk, linking F(1) to F(0). This chain is ATP synthase subunit b, chloroplastic, found in Nicotiana tabacum (Common tobacco).